A 243-amino-acid chain; its full sequence is Venom nerve growth factor (243 aa).

Positions 1–18 are cleaved as a signal peptide; that stretch reads MSMLCYTLIIAFLIGIWA. A propeptide spanning residues 19–125 is cleaved from the precursor; that stretch reads APKSEDNVPL…TLNRNIRTKR (107 aa). A disordered region spans residues 45–66; sequence HEGLKTSRNTDQRHLAPKKAED. Over residues 46-66 the composition is skewed to basic and acidic residues; sequence EGLKTSRNTDQRHLAPKKAED. Disulfide bonds link cysteine 139/cysteine 204, cysteine 182/cysteine 232, and cysteine 192/cysteine 234. The N-linked (GlcNAc...) asparagine glycan is linked to asparagine 148.

It belongs to the NGF-beta family. As to quaternary structure, homodimer; non-covalently linked. In terms of tissue distribution, expressed by the venom gland.

The protein localises to the secreted. Functionally, nerve growth factor is important for the development and maintenance of the sympathetic and sensory nervous systems. It stimulates division and differentiation of sympathetic and embryonic sensory neurons as well as basal forebrain cholinergic neurons in the brain. Its relevance in the snake venom is not clear. However, it has been shown to inhibit metalloproteinase-dependent proteolysis of platelet glycoprotein Ib alpha, suggesting a metalloproteinase inhibition to prevent metalloprotease autodigestion and/or protection against prey proteases. Binds a lipid between the two protein chains in the homodimer. The lipid-bound form promotes histamine relase from mouse mast cells, contrary to the lipid-free form. The sequence is that of Venom nerve growth factor from Cryptophis nigrescens (Eastern small-eyed snake).